The sequence spans 171 residues: Putative ankyrin repeat protein PA3287 (171 aa).

ANK repeat units lie at residues 48–77 (KGDSLLMLASYHGHADTVRLLLAYKADPDL), 81–110 (AGQTPLAGAAFKGDLAMVELLLAGGADVEG), and 114–143 (DGKTALMMAAMFNQAEVAASLLAHGARRDA).

This chain is Putative ankyrin repeat protein PA3287, found in Pseudomonas aeruginosa (strain ATCC 15692 / DSM 22644 / CIP 104116 / JCM 14847 / LMG 12228 / 1C / PRS 101 / PAO1).